The following is a 372-amino-acid chain: Germination protease (372 aa).

Residues 1–15 (MNRSIDLSMYSVRTD) constitute a propeptide that is removed on maturation.

It belongs to the peptidase A25 family. As to quaternary structure, homotetramer. Post-translationally, autoproteolytically processed. The inactive tetrameric zymogen termed p46 autoprocesses to a smaller form termed p41, which is active only during spore germination.

The enzyme catalyses Endopeptidase action with P4 Glu or Asp, P1 preferably Glu &gt; Asp, P1' hydrophobic and P2' Ala.. In terms of biological role, initiates the rapid degradation of small, acid-soluble proteins during spore germination. The polypeptide is Germination protease (Geobacillus sp. (strain WCH70)).